The following is a 722-amino-acid chain: Glycine--tRNA ligase beta subunit (722 aa).

The protein belongs to the class-II aminoacyl-tRNA synthetase family. Tetramer of two alpha and two beta subunits.

It localises to the cytoplasm. It catalyses the reaction tRNA(Gly) + glycine + ATP = glycyl-tRNA(Gly) + AMP + diphosphate. The chain is Glycine--tRNA ligase beta subunit from Haemophilus influenzae (strain 86-028NP).